Here is a 387-residue protein sequence, read N- to C-terminus: Small ribosomal subunit protein uS5m (387 aa).

A mitochondrion-targeting transit peptide spans 1-22; it reads MLRSFSHFLQIGSRRQPTYFRC. Residues 33 to 87 form a disordered region; that stretch reads FKNDPKKELNSNLNEKSVEESSKNETKEQFNSSSIPRESESEGKTASNTSPLSPK. Residues 48–60 show a composition bias toward basic and acidic residues; it reads KSVEESSKNETKE. A Phosphoserine modification is found at Ser-85. The region spanning 225–288 is the S5 DRBM domain; sequence LMFVPLVRRR…GRAVKNMVYI (64 aa).

It belongs to the universal ribosomal protein uS5 family. Component of the mitochondrial small ribosomal subunit (mt-SSU). Mature yeast 74S mitochondrial ribosomes consist of a small (37S) and a large (54S) subunit. The 37S small subunit contains a 15S ribosomal RNA (15S mt-rRNA) and at least 32 different proteins. The 54S large subunit contains a 21S rRNA (21S mt-rRNA) and at least 45 different proteins. uS3m, uS4m and uS5m form the narrow entry site of the mRNA channel.

It is found in the mitochondrion. Component of the mitochondrial ribosome (mitoribosome), a dedicated translation machinery responsible for the synthesis of mitochondrial genome-encoded proteins, including at least some of the essential transmembrane subunits of the mitochondrial respiratory chain. The mitoribosomes are attached to the mitochondrial inner membrane and translation products are cotranslationally integrated into the membrane. This chain is Small ribosomal subunit protein uS5m (mrp5), found in Schizosaccharomyces pombe (strain 972 / ATCC 24843) (Fission yeast).